The following is a 327-amino-acid chain: DNA-directed RNA polymerase subunit alpha (327 aa).

The interval 1 to 233 (MVREKVKVST…NLFIPFLHVE (233 aa)) is alpha N-terminal domain (alpha-NTD). The interval 267–327 (LAFQYIFIDQ…KKILDILEKK (61 aa)) is alpha C-terminal domain (alpha-CTD).

This sequence belongs to the RNA polymerase alpha chain family. As to quaternary structure, in plastids the minimal PEP RNA polymerase catalytic core is composed of four subunits: alpha, beta, beta', and beta''. When a (nuclear-encoded) sigma factor is associated with the core the holoenzyme is formed, which can initiate transcription.

It localises to the plastid. Its subcellular location is the chloroplast. The catalysed reaction is RNA(n) + a ribonucleoside 5'-triphosphate = RNA(n+1) + diphosphate. In terms of biological role, DNA-dependent RNA polymerase catalyzes the transcription of DNA into RNA using the four ribonucleoside triphosphates as substrates. This is DNA-directed RNA polymerase subunit alpha from Crucihimalaya wallichii (Rock-cress).